Here is a 169-residue protein sequence, read N- to C-terminus: Ribosome maturation factor RimM (169 aa).

In terms of domain architecture, PRC barrel spans 91-167 (EGEYYFADLI…RIVIATDFAH (77 aa)).

It belongs to the RimM family. Binds ribosomal protein uS19.

Its subcellular location is the cytoplasm. Its function is as follows. An accessory protein needed during the final step in the assembly of 30S ribosomal subunit, possibly for assembly of the head region. Essential for efficient processing of 16S rRNA. May be needed both before and after RbfA during the maturation of 16S rRNA. It has affinity for free ribosomal 30S subunits but not for 70S ribosomes. In Erythrobacter litoralis (strain HTCC2594), this protein is Ribosome maturation factor RimM.